Consider the following 158-residue polypeptide: NADH-quinone oxidoreductase subunit B (158 aa).

[4Fe-4S] cluster contacts are provided by Cys-37, Cys-38, Cys-102, and Cys-132.

The protein belongs to the complex I 20 kDa subunit family. In terms of assembly, NDH-1 is composed of 14 different subunits. Subunits NuoB, C, D, E, F, and G constitute the peripheral sector of the complex. It depends on [4Fe-4S] cluster as a cofactor.

The protein resides in the cell inner membrane. The catalysed reaction is a quinone + NADH + 5 H(+)(in) = a quinol + NAD(+) + 4 H(+)(out). Its function is as follows. NDH-1 shuttles electrons from NADH, via FMN and iron-sulfur (Fe-S) centers, to quinones in the respiratory chain. The immediate electron acceptor for the enzyme in this species is believed to be ubiquinone. Couples the redox reaction to proton translocation (for every two electrons transferred, four hydrogen ions are translocated across the cytoplasmic membrane), and thus conserves the redox energy in a proton gradient. This Thioalkalivibrio sulfidiphilus (strain HL-EbGR7) protein is NADH-quinone oxidoreductase subunit B.